Reading from the N-terminus, the 584-residue chain is DNA ligase (584 aa).

Glutamate 249 contacts ATP. Lysine 251 (N6-AMP-lysine intermediate) is an active-site residue. ATP is bound by residues arginine 256, arginine 271, glutamate 301, phenylalanine 341, arginine 416, and lysine 422.

Belongs to the ATP-dependent DNA ligase family. Requires Mg(2+) as cofactor.

It catalyses the reaction ATP + (deoxyribonucleotide)n-3'-hydroxyl + 5'-phospho-(deoxyribonucleotide)m = (deoxyribonucleotide)n+m + AMP + diphosphate.. DNA ligase that seals nicks in double-stranded DNA during DNA replication, DNA recombination and DNA repair. This is DNA ligase from Pyrobaculum islandicum (strain DSM 4184 / JCM 9189 / GEO3).